The primary structure comprises 101 residues: Protein Tat (101 aa).

Residues 1-10 show a composition bias toward basic and acidic residues; that stretch reads MEPVDPRLEP. Positions 1 to 20 are disordered; it reads MEPVDPRLEPWNHPGSQPKT. The interaction with human CREBBP stretch occupies residues 1–24; sequence MEPVDPRLEPWNHPGSQPKTACNN. Positions 1–48 are transactivation; the sequence is MEPVDPRLEPWNHPGSQPKTACNNCYCKRCCYHCLYCFTKKGLGISYG. Residues Cys-22, Cys-25, and Cys-27 each coordinate Zn(2+). The cysteine-rich stretch occupies residues 22–37; the sequence is CNNCYCKRCCYHCLYC. Lys-28 bears the N6-acetyllysine; by host PCAF mark. Zn(2+) is bound by residues Cys-30, His-33, Cys-34, and Cys-37. Positions 38–48 are core; the sequence is FTKKGLGISYG. The span at 48–58 shows a compositional bias: basic residues; that stretch reads GRKKRSQRRRT. Residues 48–101 are disordered; it reads GRKKRSQRRRTPQSSKSHQDLIPEQPLSQQQGDQTGQKKQKEALESKTEADPCD. The Nuclear localization signal, RNA-binding (TAR), and protein transduction signature appears at 49–57; that stretch reads RKKRSQRRR. The interaction with the host capping enzyme RNGTT stretch occupies residues 49 to 86; that stretch reads RKKRSQRRRTPQSSKSHQDLIPEQPLSQQQGDQTGQKK. Residues Lys-50 and Lys-51 each carry the N6-acetyllysine; by host EP300 and GCN5L2 modification. Arg-52 bears the Asymmetric dimethylarginine; by host PRMT6 mark. Basic and acidic residues predominate over residues 86–101; it reads KQKEALESKTEADPCD.

This sequence belongs to the lentiviruses Tat family. As to quaternary structure, interacts with host CCNT1. Associates with the P-TEFb complex composed at least of Tat, P-TEFb (CDK9 and CCNT1), TAR RNA, RNA Pol II. Recruits the HATs CREBBP, TAF1/TFIID, EP300, PCAF and GCN5L2. Interacts with host KAT5/Tip60; this interaction targets the latter to degradation. Interacts with the host deacetylase SIRT1. Interacts with host capping enzyme RNGTT; this interaction stimulates RNGTT. Binds to host KDR, and to the host integrins ITGAV/ITGB3 and ITGA5/ITGB1. Interacts with host KPNB1/importin beta-1 without previous binding to KPNA1/importin alpha-1. Interacts with EIF2AK2. Interacts with host nucleosome assembly protein NAP1L1; this interaction may be required for the transport of Tat within the nucleus, since the two proteins interact at the nuclear rim. Interacts with host C1QBP/SF2P32; this interaction involves lysine-acetylated Tat. Interacts with the host chemokine receptors CCR2, CCR3 and CXCR4. Interacts with host DPP4/CD26; this interaction may trigger an anti-proliferative effect. Interacts with host LDLR. Interacts with the host extracellular matrix metalloproteinase MMP1. Interacts with host PRMT6; this interaction mediates Tat's methylation. Interacts with, and is ubiquitinated by MDM2/Hdm2. Interacts with host PSMC3 and HTATIP2. Interacts with STAB1; this interaction may overcome SATB1-mediated repression of IL2 and IL2RA (interleukin) in T cells by binding to the same domain than HDAC1. Interacts (when acetylated) with human CDK13, thereby increasing HIV-1 mRNA splicing and promoting the production of the doubly spliced HIV-1 protein Nef. Interacts with host TBP; this interaction modulates the activity of transcriptional pre-initiation complex. Interacts with host RELA. Interacts with host PLSCR1; this interaction negatively regulates Tat transactivation activity by altering its subcellular distribution. Asymmetrical arginine methylation by host PRMT6 seems to diminish the transactivation capacity of Tat and affects the interaction with host CCNT1. Post-translationally, acetylation by EP300, CREBBP, GCN5L2/GCN5 and PCAF regulates the transactivation activity of Tat. EP300-mediated acetylation of Lys-50 promotes dissociation of Tat from the TAR RNA through the competitive binding to PCAF's bromodomain. In addition, the non-acetylated Tat's N-terminus can also interact with PCAF. PCAF-mediated acetylation of Lys-28 enhances Tat's binding to CCNT1. Lys-50 is deacetylated by SIRT1. In terms of processing, polyubiquitination by host MDM2 does not target Tat to degradation, but activates its transactivation function and fosters interaction with CCNT1 and TAR RNA. Phosphorylated by EIF2AK2 on serine and threonine residues adjacent to the basic region important for TAR RNA binding and function. Phosphorylation of Tat by EIF2AK2 is dependent on the prior activation of EIF2AK2 by dsRNA.

The protein localises to the host nucleus. It localises to the host nucleolus. The protein resides in the host cytoplasm. It is found in the secreted. In terms of biological role, transcriptional activator that increases RNA Pol II processivity, thereby increasing the level of full-length viral transcripts. Recognizes a hairpin structure at the 5'-LTR of the nascent viral mRNAs referred to as the transactivation responsive RNA element (TAR) and recruits the cyclin T1-CDK9 complex (P-TEFb complex) that will in turn hyperphosphorylate the RNA polymerase II to allow efficient elongation. The CDK9 component of P-TEFb and other Tat-activated kinases hyperphosphorylate the C-terminus of RNA Pol II that becomes stabilized and much more processive. Other factors such as HTATSF1/Tat-SF1, SUPT5H/SPT5, and HTATIP2 are also important for Tat's function. Besides its effect on RNA Pol II processivity, Tat induces chromatin remodeling of proviral genes by recruiting the histone acetyltransferases (HATs) CREBBP, EP300 and PCAF to the chromatin. This also contributes to the increase in proviral transcription rate, especially when the provirus integrates in transcriptionally silent region of the host genome. To ensure maximal activation of the LTR, Tat mediates nuclear translocation of NF-kappa-B by interacting with host RELA. Through its interaction with host TBP, Tat may also modulate transcription initiation. Tat can reactivate a latently infected cell by penetrating in it and transactivating its LTR promoter. In the cytoplasm, Tat is thought to act as a translational activator of HIV-1 mRNAs. Functionally, extracellular circulating Tat can be endocytosed by surrounding uninfected cells via the binding to several surface receptors such as CD26, CXCR4, heparan sulfate proteoglycans (HSPG) or LDLR. Neurons are rarely infected, but they internalize Tat via their LDLR. Through its interaction with nuclear HATs, Tat is potentially able to control the acetylation-dependent cellular gene expression. Modulates the expression of many cellular genes involved in cell survival, proliferation or in coding for cytokines or cytokine receptors. Tat plays a role in T-cell and neurons apoptosis. Tat induced neurotoxicity and apoptosis probably contribute to neuroAIDS. Circulating Tat also acts as a chemokine-like and/or growth factor-like molecule that binds to specific receptors on the surface of the cells, affecting many cellular pathways. In the vascular system, Tat binds to ITGAV/ITGB3 and ITGA5/ITGB1 integrins dimers at the surface of endothelial cells and competes with bFGF for heparin-binding sites, leading to an excess of soluble bFGF. The chain is Protein Tat from Homo sapiens (Human).